The sequence spans 476 residues: tRNA(Ile)-lysidine synthase (476 aa).

Residue 30–35 coordinates ATP; sequence SGGPDS.

The protein belongs to the tRNA(Ile)-lysidine synthase family.

Its subcellular location is the cytoplasm. The enzyme catalyses cytidine(34) in tRNA(Ile2) + L-lysine + ATP = lysidine(34) in tRNA(Ile2) + AMP + diphosphate + H(+). Its function is as follows. Ligates lysine onto the cytidine present at position 34 of the AUA codon-specific tRNA(Ile) that contains the anticodon CAU, in an ATP-dependent manner. Cytidine is converted to lysidine, thus changing the amino acid specificity of the tRNA from methionine to isoleucine. The sequence is that of tRNA(Ile)-lysidine synthase from Bacillus cereus (strain ZK / E33L).